We begin with the raw amino-acid sequence, 410 residues long: Indoleamine 2,3-dioxygenase nanC (410 aa).

His309 is a binding site for heme.

Belongs to the indoleamine 2,3-dioxygenase family. Heme is required as a cofactor.

It carries out the reaction D-tryptophan + O2 = N-formyl-D-kynurenine. The catalysed reaction is L-tryptophan + O2 = N-formyl-L-kynurenine. It functions in the pathway secondary metabolite biosynthesis. Indoleamine 2,3-dioxygenase; part of the gene cluster that mediates the biosynthesis of the benzazepine alkaloid nanangelenin A which contains an unprecedented 3,4-dihydro-1-benzazepine-2,5-dione-N-prenyl-N-acetoxy-anthranilamide scaffold. The first step of nanangelenin biosynthesis is catalyzed by the indoleamine 2,3-dioxygenase nanC which produces N-formyl-kynurenine through the catabolism of tryptophan. The two-module NRPS nanA then utilizes anthranilate (Ant) and L-kynurenine (L-Kyn) to assemble the dipeptide product nanangelenin B. The first adenylation domain of nanA (A1) loads anthranilate onto the T1 domain, while A2 loads kynurenine, generated through spontaneous nonenzymatic deformylation of the nanC-supplied N-formyl-kynurenine. The peptide bond formation between the tethered amino acids is catalyzed by the first condensation domain (C1) between anthranilate's carbonyl carbon and kynurenine's aliphatic primary amine. The second C domain (C2) catalyzes the final cyclization event between the aromatic amine of kynurenine and the tethered carbonyl carbon, yielding nanangelenin B. The terminal T3 domain enhances the catalytic efficiency of C2, suggesting the T2-tethered Ant-L-Kyn is transferred to T3 prior to cyclization by C2. Once released from nanA, nanangelenin B is then prenylated by the prenyltransferase nanD to form nanangelenin C. Nanangelenin C is then N-hydroxylated by the FAD-dependent monooxygenase nanF and further acetylated by the acetyltransferase nanB to yield nanangelenin F. Finally, the N-methyltransferase nanE methylates the amide nitrogen of 1-benzazepine to convert nanangelenin F into nanangelenin A. NanE is also able to methylate most of the intermediates of the pathway such as nanangelenin B and nanangelenin C to produce nanangelenin D and nanangelenin E, respectively. This Aspergillus nanangensis protein is Indoleamine 2,3-dioxygenase nanC.